Consider the following 238-residue polypeptide: tRNA (guanine-N(7)-)-methyltransferase (238 aa).

The S-adenosyl-L-methionine site is built by E68, E93, D120, and D143. The active site involves D143. Residues K147, D179, and 216–219 (TKFE) contribute to the substrate site.

Belongs to the class I-like SAM-binding methyltransferase superfamily. TrmB family.

The enzyme catalyses guanosine(46) in tRNA + S-adenosyl-L-methionine = N(7)-methylguanosine(46) in tRNA + S-adenosyl-L-homocysteine. It participates in tRNA modification; N(7)-methylguanine-tRNA biosynthesis. In terms of biological role, catalyzes the formation of N(7)-methylguanine at position 46 (m7G46) in tRNA. The polypeptide is tRNA (guanine-N(7)-)-methyltransferase (Shewanella sp. (strain W3-18-1)).